We begin with the raw amino-acid sequence, 89 residues long: Transcription elongation factor 1 homolog (89 aa).

Residues cysteine 25, cysteine 28, cysteine 49, and cysteine 52 each coordinate Zn(2+).

Belongs to the ELOF1 family.

It localises to the nucleus. In terms of biological role, transcription elongation factor implicated in the maintenance of proper chromatin structure in actively transcribed regions. In Oryza sativa subsp. japonica (Rice), this protein is Transcription elongation factor 1 homolog.